The chain runs to 286 residues: Bifunctional protein FolD (286 aa).

Residues 165–167 (GRS), Ser190, and Val231 each bind NADP(+).

Belongs to the tetrahydrofolate dehydrogenase/cyclohydrolase family. As to quaternary structure, homodimer.

It carries out the reaction (6R)-5,10-methylene-5,6,7,8-tetrahydrofolate + NADP(+) = (6R)-5,10-methenyltetrahydrofolate + NADPH. It catalyses the reaction (6R)-5,10-methenyltetrahydrofolate + H2O = (6R)-10-formyltetrahydrofolate + H(+). The protein operates within one-carbon metabolism; tetrahydrofolate interconversion. Functionally, catalyzes the oxidation of 5,10-methylenetetrahydrofolate to 5,10-methenyltetrahydrofolate and then the hydrolysis of 5,10-methenyltetrahydrofolate to 10-formyltetrahydrofolate. This Bacillus cereus (strain ZK / E33L) protein is Bifunctional protein FolD.